A 179-amino-acid chain; its full sequence is Transcription factor NF-E4 (179 aa).

Lysine 43 is subject to N6-acetyllysine. Residues 100–179 (AMKATGPHNA…QLPSLHLSQG (80 aa)) form a disordered region. Composition is skewed to polar residues over residues 143-153 (LSQSNPPTRIS) and 163-179 (ALEQ…LSQG).

In terms of assembly, component of the SSP (stage selector protein) complex, which appears to be a heteromer of TFCP2 and 2 copies of NFE4. Interacts with HDAC1 and PCAF. Isoform 2 interacts with TFCP2. Acetylation at Lys-43 prolongs the protein half-life by preventing ubiquitin-mediated degradation and reduces the interaction between NF-E4 and HDAC1, potentially maximizing the activating ability of the factor at the gamma-promoter. Post-translationally, ubiquitinated; leading to its degradation by the proteasome. Acetylation at Lys-43 prevents ubiquitination. As to expression, specifically expressed in fetal liver, cord blood and bone marrow. Also expressed in the K562 and HEL cell lines, which constitutively express the fetal globin genes.

It is found in the nucleus. Functionally, functions as part of the SSP (stage selector protein) complex, a complex that contributes to the preferential expression of the gamma-gene in fetal erythroid cells by facilitating the interaction of the gamma-globin genes with enhancer elements contained in the locus control region (LCR). The complex binds to the stage selector element (SSE) in the proximal gamma-globin promoter. In contrast, isoform 2 acts as a repressor of gamma-globin gene expression by preventing NFE2 and RNA polymerase II recruitment to the promoter. This is Transcription factor NF-E4 (NFE4) from Homo sapiens (Human).